We begin with the raw amino-acid sequence, 64 residues long: DNA-directed RNA polymerase subunit Rpo10 (64 aa).

4 residues coordinate Zn(2+): C7, C10, C45, and C46.

Belongs to the archaeal Rpo10/eukaryotic RPB10 RNA polymerase subunit family. As to quaternary structure, part of the RNA polymerase complex. Zn(2+) is required as a cofactor.

The protein localises to the cytoplasm. The catalysed reaction is RNA(n) + a ribonucleoside 5'-triphosphate = RNA(n+1) + diphosphate. Functionally, DNA-dependent RNA polymerase (RNAP) catalyzes the transcription of DNA into RNA using the four ribonucleoside triphosphates as substrates. The sequence is that of DNA-directed RNA polymerase subunit Rpo10 from Halorubrum lacusprofundi (strain ATCC 49239 / DSM 5036 / JCM 8891 / ACAM 34).